Consider the following 145-residue polypeptide: MQALLAPVVEALGYECWGIEFLSQGRHSLLRVYIDHADGILIDDCEKVSRQISGVLDVEDPISSEYTLEVSSPGMDRPLFTLEQFVRCAGEQVKIRLRSPFEGRRNFQGLLRGVEDQDVVVLVDDHEYLLPIDLIDKANIIPRFD.

It belongs to the RimP family.

Its subcellular location is the cytoplasm. In terms of biological role, required for maturation of 30S ribosomal subunits. This is Ribosome maturation factor RimP from Azotobacter vinelandii (strain DJ / ATCC BAA-1303).